We begin with the raw amino-acid sequence, 501 residues long: Putative antiporter subunit mnhD2 (501 aa).

Transmembrane regions (helical) follow at residues Ser-4–Ile-24, Ile-33–Val-53, Leu-79–Phe-99, Tyr-109–Ala-129, Leu-131–Leu-151, Ile-162–Leu-182, Ile-207–Phe-227, Phe-245–Phe-265, Pro-274–Tyr-294, Ile-309–Phe-329, Asp-334–Leu-354, Phe-369–Gly-389, Leu-409–Val-429, and Asn-452–Phe-472.

The protein belongs to the CPA3 antiporters (TC 2.A.63) subunit D family. As to quaternary structure, may form a heterooligomeric complex that consists of seven subunits: mnhA2, mnhB2, mnhC2, mnhD2, mnhE2, mnhF2 and mnhG2.

It localises to the cell membrane. This chain is Putative antiporter subunit mnhD2 (mnhD2), found in Staphylococcus saprophyticus subsp. saprophyticus (strain ATCC 15305 / DSM 20229 / NCIMB 8711 / NCTC 7292 / S-41).